The primary structure comprises 93 residues: Small ribosomal subunit protein uS19 (93 aa).

It belongs to the universal ribosomal protein uS19 family.

In terms of biological role, protein S19 forms a complex with S13 that binds strongly to the 16S ribosomal RNA. This is Small ribosomal subunit protein uS19 from Ehrlichia canis (strain Jake).